The chain runs to 229 residues: Acetylornithine aminotransferase (229 aa).

Pyridoxal 5'-phosphate-binding positions include 95-96 (GA) and Phe122. Residue Arg125 participates in N(2)-acetyl-L-ornithine binding. 208-211 (DEIQ) provides a ligand contact to pyridoxal 5'-phosphate.

This sequence belongs to the class-III pyridoxal-phosphate-dependent aminotransferase family. ArgD subfamily. Homodimer. Pyridoxal 5'-phosphate serves as cofactor.

Its subcellular location is the cytoplasm. It carries out the reaction N(2)-acetyl-L-ornithine + 2-oxoglutarate = N-acetyl-L-glutamate 5-semialdehyde + L-glutamate. It participates in amino-acid biosynthesis; L-arginine biosynthesis; N(2)-acetyl-L-ornithine from L-glutamate: step 4/4. The chain is Acetylornithine aminotransferase (argD) from Bacillus amyloliquefaciens (Bacillus velezensis).